The chain runs to 420 residues: Phosphoglycerate kinase (420 aa).

(2R)-3-phosphoglycerate is bound by residues V24, D25, F26, N27, R40, S63, H64, G66, R67, L122, R123, H170, and R171. G214 lines the ADP pocket. G214 is a CDP binding site. The AMP site is built by A215 and K216. An ATP-binding site is contributed by A215. Position 215 (A215) interacts with Mg(2+). CDP is bound at residue D219. D219 lines the Mg(2+) pocket. K220 provides a ligand contact to AMP. K220 is a binding site for ATP. G238 provides a ligand contact to ADP. A CDP-binding site is contributed by G238. AMP contacts are provided by G239 and G313. Residues G239 and G313 each contribute to the ATP site. CDP is bound by residues G338 and F343. F343 is an ADP binding site. E344 is an AMP binding site. Residues E344, D375, and T376 each coordinate ATP. D375 serves as a coordination point for Mg(2+).

Belongs to the phosphoglycerate kinase family. As to quaternary structure, monomer. Requires Mg(2+) as cofactor.

The catalysed reaction is (2R)-3-phosphoglycerate + ATP = (2R)-3-phospho-glyceroyl phosphate + ADP. Its pathway is carbohydrate degradation; glycolysis; pyruvate from D-glyceraldehyde 3-phosphate: step 2/5. In Tetrahymena thermophila, this protein is Phosphoglycerate kinase (PGK).